The chain runs to 85 residues: Putative membrane protein insertion efficiency factor (85 aa).

It belongs to the UPF0161 family.

Its subcellular location is the cell inner membrane. Its function is as follows. Could be involved in insertion of integral membrane proteins into the membrane. The polypeptide is Putative membrane protein insertion efficiency factor (Vibrio atlanticus (strain LGP32) (Vibrio splendidus (strain Mel32))).